The sequence spans 1366 residues: Protein strawberry notch homolog 2 (1366 aa).

Disordered regions lie at residues 1–24 (MLAV…GSLL), 174–217 (QEQS…KQHP), 614–640 (STKR…KAPR), and 1324–1366 (HAGP…QAPL). Over residues 15-24 (HEPPPAGSLL) the composition is skewed to pro residues. The span at 182 to 194 (PEEEDEAEEEEAE) shows a compositional bias: acidic residues. Basic residues predominate over residues 614–637 (STKRKRDRGAGSKRKRRPRGRGAK). Positions 1333-1347 (LGEGAGAGGAAGGGP) are enriched in gly residues.

This sequence belongs to the SBNO family. As to quaternary structure, interacts with TAL1; this interaction inhibits TAL1 occupancy of the DCSTAMP promoter, leading to the activation of the DCSTAMP promoter by the transcription factor MITF. As to expression, detected in macrophages. IL10 regulates expression in a STAT3-dependent way.

Acts as a transcriptional coregulator, that can have both coactivator and corepressor functions. Inhibits the DCSTAMP-repressive activity of TAL1, hence enhancing the access of the transcription factor MITF to the DC-STAMP promoter in osteoclast. Plays a role in bone homeostasis; required as a positive regulator in TNFSF11//RANKL-mediated osteoclast fusion via a DCSTAMP-dependent pathway. May also be required in the regulation of osteoblast differentiation. Involved in the transcriptional corepression of NF-kappaB in macrophages. Plays a role as a regulator in the pro-inflammatory cascade. The sequence is that of Protein strawberry notch homolog 2 (SBNO2) from Homo sapiens (Human).